We begin with the raw amino-acid sequence, 222 residues long: RNA-binding protein KhpB (222 aa).

The interval 2 to 51 is jag_N domain; sequence DMVTVTAKTVEEAVTKALIELQTTSDKLTYEIVEKGSAGFLGIGSKPAII. In terms of domain architecture, KH spans 54–133; sequence KRKETLQDKA…KSSSDYIRVK (80 aa). The region spanning 138 to 204 is the R3H domain; it reads NYRERRKETL…EEPFRHVIIS (67 aa).

This sequence belongs to the KhpB RNA-binding protein family. As to quaternary structure, forms a complex with KhpA. Homodimer or homotrimer.

It is found in the cytoplasm. In terms of biological role, a probable RNA chaperone. Forms a complex with KhpA which binds to cellular RNA and controls its expression. Plays a role in peptidoglycan (PG) homeostasis and cell length regulation. The polypeptide is RNA-binding protein KhpB (Clostridium symbiosum (Bacteroides symbiosus)).